The following is an 82-amino-acid chain: Small ribosomal subunit protein eS21 (82 aa).

This sequence belongs to the eukaryotic ribosomal protein eS21 family.

The protein is Small ribosomal subunit protein eS21 (RPS21) of Cyanophora paradoxa.